The following is a 109-amino-acid chain: Nucleoid-associated protein HAPS_1040 (109 aa).

Residues 1-21 (MFGKGGLGGLMKQAQQMQERM) are disordered. Residues 10 to 19 (LMKQAQQMQE) are compositionally biased toward low complexity.

It belongs to the YbaB/EbfC family. In terms of assembly, homodimer.

It is found in the cytoplasm. Its subcellular location is the nucleoid. Functionally, binds to DNA and alters its conformation. May be involved in regulation of gene expression, nucleoid organization and DNA protection. In Glaesserella parasuis serovar 5 (strain SH0165) (Haemophilus parasuis), this protein is Nucleoid-associated protein HAPS_1040.